The primary structure comprises 238 residues: Ribonuclease PH (238 aa).

Phosphate contacts are provided by residues R86 and 124 to 126 (GTR).

Belongs to the RNase PH family. In terms of assembly, homohexameric ring arranged as a trimer of dimers.

It carries out the reaction tRNA(n+1) + phosphate = tRNA(n) + a ribonucleoside 5'-diphosphate. Phosphorolytic 3'-5' exoribonuclease that plays an important role in tRNA 3'-end maturation. Removes nucleotide residues following the 3'-CCA terminus of tRNAs; can also add nucleotides to the ends of RNA molecules by using nucleoside diphosphates as substrates, but this may not be physiologically important. Probably plays a role in initiation of 16S rRNA degradation (leading to ribosome degradation) during starvation. The chain is Ribonuclease PH from Mannheimia haemolytica (Pasteurella haemolytica).